Here is a 487-residue protein sequence, read N- to C-terminus: NGFI-A-binding protein 1 (487 aa).

Residues 4 to 82 are NCD1; the sequence is ALPRTLGELQ…RDWVTNPGLF (79 aa). Glycyl lysine isopeptide (Lys-Gly) (interchain with G-Cter in SUMO2) cross-links involve residues Lys126, Lys129, and Lys143. The disordered stretch occupies residues 162-188; sequence QGHHATESEHSLSPADLGSPASPKESS. A phosphoserine mark is found at Ser172 and Ser183. Residue Lys212 forms a Glycyl lysine isopeptide (Lys-Gly) (interchain with G-Cter in SUMO2) linkage. Residues 221-310 form an NCD2 region; it reads LLKTNKKLAK…ARQISREVTY (90 aa). Residues 307–338 are necessary for nuclear localization; that stretch reads EVTYKYTYRTTKSKCGERDELSPKRIKVEDGF. Ser328 is modified (phosphoserine). Lys333 participates in a covalent cross-link: Glycyl lysine isopeptide (Lys-Gly) (interchain with G-Cter in SUMO1); alternate. Lys333 is covalently cross-linked (Glycyl lysine isopeptide (Lys-Gly) (interchain with G-Cter in SUMO2); alternate). Glycyl lysine isopeptide (Lys-Gly) (interchain with G-Cter in SUMO2) cross-links involve residues Lys355, Lys369, and Lys373. A disordered region spans residues 399–434; sequence YRQSSEEHSPNGLTSDNSDGQGERPLNLRMPNLQNR. At Ser407 the chain carries Phosphoserine. Polar residues predominate over residues 409–418; that stretch reads NGLTSDNSDG. Residues Lys454, Lys465, and Lys477 each participate in a glycyl lysine isopeptide (Lys-Gly) (interchain with G-Cter in SUMO2) cross-link. A Glycyl lysine isopeptide (Lys-Gly) (interchain with G-Cter in SUMO1); alternate cross-link involves residue Lys480. Lys480 is covalently cross-linked (Glycyl lysine isopeptide (Lys-Gly) (interchain with G-Cter in SUMO2); alternate).

It belongs to the NAB family. In terms of assembly, homomultimers may associate with EGR1 bound to DNA. Isoform Short is found in myeloid leukemia cell line KG-1.

It localises to the nucleus. Functionally, acts as a transcriptional repressor for zinc finger transcription factors EGR1 and EGR2. In Homo sapiens (Human), this protein is NGFI-A-binding protein 1 (NAB1).